A 99-amino-acid polypeptide reads, in one-letter code: Putative septation protein SpoVG (99 aa).

The protein belongs to the SpoVG family.

Its function is as follows. Could be involved in septation. This Exiguobacterium sp. (strain ATCC BAA-1283 / AT1b) protein is Putative septation protein SpoVG.